A 266-amino-acid chain; its full sequence is Apolipoprotein A-I (266 aa).

The N-terminal stretch at 1–18 is a signal peptide; the sequence is MKAVVLTLAVLFLTGSQA. 2 consecutive repeat copies span residues 67 to 88 and 89 to 110. A 10 X approximate tandem repeats region spans residues 67–266; the sequence is LKLLDNWDSL…DEATKKLNAQ (200 aa). Position 109 is a methionine sulfoxide (Met109). The stretch at 111 to 121 is one 3; half-length repeat; the sequence is KDLEEVKKKVQ. 5 tandem repeats follow at residues 122-143, 144-165, 166-187, 188-209, and 210-231. Residues 232-242 form a 9; half-length repeat; that stretch reads PALEDLRQGLM. Residues 243–266 form repeat 10; that stretch reads PVLESFRASLLAAVDEATKKLNAQ.

It belongs to the apolipoprotein A1/A4/E family. As to quaternary structure, homodimer. Interacts with APOA1BP and CLU. Component of a sperm activating protein complex (SPAP), consisting of APOA1, an immunoglobulin heavy chain, an immunoglobulin light chain and albumin. Interacts with NDRG1. Interacts with SCGB3A2. Interacts with NAXE and YJEFN3. In terms of processing, glycosylated. Post-translationally, palmitoylated. Phosphorylation sites are present in the extracellular medium.

Its subcellular location is the secreted. In terms of biological role, participates in the reverse transport of cholesterol from tissues to the liver for excretion by promoting cholesterol efflux from tissues and by acting as a cofactor for the lecithin cholesterol acyltransferase (LCAT). As part of the SPAP complex, activates spermatozoa motility. This is Apolipoprotein A-I (APOA1) from Phoca vitulina (Harbor seal).